The following is a 448-amino-acid chain: ATP-dependent RNA helicase sub2 (448 aa).

The segment covering 19 to 29 (DAAATTAAPAA) has biased composition (low complexity). The disordered stretch occupies residues 19 to 43 (DAAATTAAPAANGAQDKKGDLTVSG). Residues 58–86 (TGFRDFLLKGELLRAITDCGFEHPSEVQQ) carry the Q motif motif. The Helicase ATP-binding domain occupies 89-271 (IPTAILNVDV…KKFMRNPLEV (183 aa)). ATP is bound at residue 102–109 (AKSGLGKT). Positions 211 to 214 (DECD) match the DECD box motif. The region spanning 283–444 (GLQQYYIKLS…EYPEGGVDSS (162 aa)) is the Helicase C-terminal domain.

Belongs to the DEAD box helicase family. DECD subfamily.

It localises to the nucleus. It catalyses the reaction ATP + H2O = ADP + phosphate + H(+). ATP-binding RNA helicase involved in transcription elongation and required for the export of mRNA out of the nucleus. SUB2 also plays a role in pre-mRNA splicing and spliceosome assembly. May be involved in rDNA and telomeric silencing, and maintenance of genome integrity. This chain is ATP-dependent RNA helicase sub2 (sub2), found in Aspergillus fumigatus (strain ATCC MYA-4609 / CBS 101355 / FGSC A1100 / Af293) (Neosartorya fumigata).